The primary structure comprises 225 residues: Claudin-17 (225 aa).

At M1 to Q7 the chain is on the cytoplasmic side. Residues I8–P28 traverse the membrane as a helical segment. Topologically, residues Q29–R81 are extracellular. A helical membrane pass occupies residues A82 to M102. Residues K103 to V124 lie on the Cytoplasmic side of the membrane. The chain crosses the membrane as a helical span at residues L125 to I145. Residues R146–A164 lie on the Extracellular side of the membrane. The chain crosses the membrane as a helical span at residues L165–F185. Topologically, residues C186 to V225 are cytoplasmic. The interval R194 to V225 is disordered. The segment covering T215 to V225 has biased composition (polar residues).

Belongs to the claudin family. Does not form homotypic polymeric strands and it is not sufficient to form tight junctions by its own. Interacts with OCLN.

The protein resides in the cell junction. It is found in the tight junction. The protein localises to the cell membrane. It catalyses the reaction chloride(in) = chloride(out). The catalysed reaction is hydrogencarbonate(in) = hydrogencarbonate(out). The enzyme catalyses bromide(in) = bromide(out). It carries out the reaction iodide(out) = iodide(in). It catalyses the reaction fluoride(in) = fluoride(out). The catalysed reaction is nitrate(in) = nitrate(out). The enzyme catalyses thiocyanate(in) = thiocyanate(out). Channel-forming tight junction protein with selectivity for anions, including chloride and hydrogencarbonate, and for solutes smaller than 9 Angstrom in diameter. In the kidney proximal tubule, may be involved in quantitative reabsorption of filtered anions. Does not affect water permeability. This chain is Claudin-17 (CLDN17), found in Sus scrofa (Pig).